Consider the following 465-residue polypeptide: MAPKKHSGFMMFVNEWRNHNAEGRRMTLAQAVSHCGTIWEKMTTQQRGPYNSGAKDADVADRGKRERLNCYGQGIAQVDLAHKEAAESLMHMKRTTERLVINAKKSYDLENAKFVFATFNYFTKALTTDVYVPAEFAACEYSLKEGVRSIYSTMIDPGQIIFGQGSDALHHSSTTHDLPLPPNALGEKNMAKLYRNIVCYLTKCQGADKPLIVFTPTENIAMVNSCFRYLECEDDSGDGGRKIQVFDIQYLLFILKKAVMDVAGLNDEKINKFVTDAFFKKDFFEFTSGIACQYHEDNDRTKYCTQSMVTRWAYTFSDFMCGDLAITVQPGKHIPAETKPNYRIICSDASSLAHESSFESFYSCPGSRVKKETQSEDFSLSSSQISVASRSYTPTDHTSFTTDLTKVCEFPSLGMRKSSKHTGPSVSTQRERNAGAWNLPAHSRSIQKYSDNDFSVTDSVRKLKN.

The HMG box DNA-binding region spans 2–69 (APKKHSGFMM…ADRGKRERLN (68 aa)). Residues 415 to 440 (MRKSSKHTGPSVSTQRERNAGAWNLP) are disordered.

This sequence belongs to the maelstrom family.

It localises to the cytoplasm. It is found in the nucleus. Its function is as follows. Involved both in the piRNA and miRNA metabolic processes. As a component of the meiotic nuage, plays a central role during oogenesis by repressing transposable elements and preventing their mobilization, which is essential for the germline integrity. Repression of transposable elements is mediated via the piRNA metabolic process, which mediates the repression of transposable elements during meiosis by forming complexes composed of piRNAs and Piwi proteins and governs the repression of transposons. As a nuclear component, it is required for proper differentiation in the germline stem cell (GSC) lineage by repressing microRNA-7 (miR-7), thereby acting as an indirect regulator of bag-of-marbles (Bam). Acts by binding to the promoter of miR-7 gene and repressing its expression; miR-7 repression alleviates the Bam repression by miR-7, thereby allowing differentiation in the germline stem cell (GSC) lineage. The protein is Protein maelstrom (mael) of Drosophila yakuba (Fruit fly).